A 183-amino-acid chain; its full sequence is Ubiquitin-conjugating enzyme E2 H (183 aa).

Residues Met1–Thr150 form the UBC core domain. Lys60 is modified (N6-acetyllysine). The active-site Glycyl thioester intermediate is Cys87. The segment at Glu152–Leu183 is disordered. Over residues Asp163–Asp172 the composition is skewed to low complexity. Acidic residues predominate over residues Phe173–Leu183.

Belongs to the ubiquitin-conjugating enzyme family. As to quaternary structure, interacts with MAEA and WDR26, components of the CTLH complex that contains GID4, RANBP9 and/or RANBP10, MKLN1, MAEA, RMND5A (or alternatively its paralog RMND5B), GID8, ARMC8, WDR26 and YPEL5. Post-translationally, autoubiquitinated in vitro in the presence of NEDD4L.

The catalysed reaction is S-ubiquitinyl-[E1 ubiquitin-activating enzyme]-L-cysteine + [E2 ubiquitin-conjugating enzyme]-L-cysteine = [E1 ubiquitin-activating enzyme]-L-cysteine + S-ubiquitinyl-[E2 ubiquitin-conjugating enzyme]-L-cysteine.. It carries out the reaction S-ubiquitinyl-[E1 ubiquitin-activating enzyme]-L-cysteine + [acceptor protein]-L-lysine = [E1 ubiquitin-activating enzyme]-L-cysteine + N(6)-monoubiquitinyl-[acceptor protein]-L-lysine.. It participates in protein modification; protein ubiquitination. Accepts ubiquitin from the E1 complex and catalyzes its covalent attachment to other proteins. E2 ubiquitin conjugating enzyme that transfers ubiquitin to MAEA, a core component of the CTLH E3 ubiquitin-protein ligase complex. In vitro catalyzes 'Lys-11'- and 'Lys-48'-linked polyubiquitination. Capable, in vitro, to ubiquitinate histone H2A. The chain is Ubiquitin-conjugating enzyme E2 H (UBE2H) from Homo sapiens (Human).